We begin with the raw amino-acid sequence, 508 residues long: 2,3-bisphosphoglycerate-independent phosphoglycerate mutase (508 aa).

Mn(2+)-binding residues include Asp9 and Ser59. Ser59 serves as the catalytic Phosphoserine intermediate. Substrate is bound by residues His120, 149–150 (RD), Arg181, Arg187, 254–257 (RADR), and Lys331. 5 residues coordinate Mn(2+): Asp398, His402, Asp439, His440, and His456.

Belongs to the BPG-independent phosphoglycerate mutase family. The cofactor is Mn(2+).

The enzyme catalyses (2R)-2-phosphoglycerate = (2R)-3-phosphoglycerate. It functions in the pathway carbohydrate degradation; glycolysis; pyruvate from D-glyceraldehyde 3-phosphate: step 3/5. In terms of biological role, catalyzes the interconversion of 2-phosphoglycerate and 3-phosphoglycerate. The chain is 2,3-bisphosphoglycerate-independent phosphoglycerate mutase from Halobacterium salinarum (strain ATCC 700922 / JCM 11081 / NRC-1) (Halobacterium halobium).